A 317-amino-acid polypeptide reads, in one-letter code: Ribonuclease Z (317 aa).

Zn(2+)-binding residues include histidine 62, histidine 64, aspartate 66, histidine 67, histidine 139, aspartate 210, and histidine 268. Residue aspartate 66 is the Proton acceptor of the active site.

This sequence belongs to the RNase Z family. Homodimer. Requires Zn(2+) as cofactor.

It carries out the reaction Endonucleolytic cleavage of RNA, removing extra 3' nucleotides from tRNA precursor, generating 3' termini of tRNAs. A 3'-hydroxy group is left at the tRNA terminus and a 5'-phosphoryl group is left at the trailer molecule.. Its function is as follows. Zinc phosphodiesterase, which displays some tRNA 3'-processing endonuclease activity. Probably involved in tRNA maturation, by removing a 3'-trailer from precursor tRNA. The sequence is that of Ribonuclease Z from Picosynechococcus sp. (strain ATCC 27264 / PCC 7002 / PR-6) (Agmenellum quadruplicatum).